The chain runs to 350 residues: Outer membrane protein A (350 aa).

Positions 1–21 (MKKTAIAIAVALAGFATVAQA) are cleaved as a signal peptide. 8 beta stranded membrane passes run 27 to 37 (TWYAGAKLGWS), 55 to 66 (QLGAGAFGGYQV), 70 to 78 (VGFEMGYDW), 96 to 107 (QGVQLTAKLGYP), 112 to 120 (LDVYTRLGG), 146 to 155 (PVFAGGIEYA), 160 to 167 (IATRLEYQ), and 186 to 194 (LLSVGVSYR). 4 tandem repeats follow at residues 205-206 (AP), 207-208 (AP), 209-210 (AP), and 211-212 (AP). The tract at residues 205 to 212 (APAPAPAP) is 4 X 2 AA tandem repeats of A-P. In terms of domain architecture, OmpA-like spans 214-342 (VQTKHFTLKS…RVEIEVKGVK (129 aa)). Cysteine 315 and cysteine 327 are disulfide-bonded.

It belongs to the outer membrane OOP (TC 1.B.6) superfamily. OmpA family. As to quaternary structure, monomer and homodimer.

Its subcellular location is the cell outer membrane. With TolR probably plays a role in maintaining the position of the peptidoglycan cell wall in the periplasm. Acts as a porin with low permeability that allows slow penetration of small solutes; an internal gate slows down solute passage. Functionally, required for conjugation with F-type plasmids; probably serves as the mating receptor on recipient cells. The chain is Outer membrane protein A from Salmonella typhi.